Consider the following 385-residue polypeptide: Succinate--CoA ligase [ADP-forming] subunit beta (385 aa).

The ATP-grasp domain occupies Lys-9–Glu-244. Residues Lys-46, Gly-53–Gly-55, Glu-99, Cys-102, and Glu-107 contribute to the ATP site. Mg(2+) contacts are provided by Asn-199 and Asp-213. Position 220 is a phosphoserine (Ser-220). Substrate contacts are provided by residues Asn-264 and Gly-321–Met-323.

Belongs to the succinate/malate CoA ligase beta subunit family. As to quaternary structure, heterotetramer of two alpha and two beta subunits. Interacts with BrxC. The cofactor is Mg(2+).

It carries out the reaction succinate + ATP + CoA = succinyl-CoA + ADP + phosphate. It catalyses the reaction GTP + succinate + CoA = succinyl-CoA + GDP + phosphate. The protein operates within carbohydrate metabolism; tricarboxylic acid cycle; succinate from succinyl-CoA (ligase route): step 1/1. In terms of biological role, succinyl-CoA synthetase functions in the citric acid cycle (TCA), coupling the hydrolysis of succinyl-CoA to the synthesis of either ATP or GTP and thus represents the only step of substrate-level phosphorylation in the TCA. The beta subunit provides nucleotide specificity of the enzyme and binds the substrate succinate, while the binding sites for coenzyme A and phosphate are found in the alpha subunit. This is Succinate--CoA ligase [ADP-forming] subunit beta from Bacillus subtilis (strain 168).